The sequence spans 156 residues: Snaclec subunit B (156 aa).

An N-terminal signal peptide occupies residues 1–23 (MGRSIFVNLGLLVVAFSLRGSEA). 3 disulfides stabilise this stretch: Cys25-Cys36, Cys53-Cys144, and Cys119-Cys136. One can recognise a C-type lectin domain in the interval 32 to 145 (YDKYCYKVFD…CKSTLPFTCK (114 aa)).

Belongs to the snaclec family. Heterodimer of subunits A and B; disulfide-linked. In terms of tissue distribution, expressed by the venom gland.

It localises to the secreted. In terms of biological role, interferes with one step of hemostasis (modulation of platelet aggregation, or coagulation cascade, for example). This chain is Snaclec subunit B, found in Philodryas olfersii (Green snake).